The primary structure comprises 300 residues: Nicotinate-nucleotide pyrophosphorylase [carboxylating] (300 aa).

Residues 5–9 (QLLPK) form an important for hexamer formation region. Residues Arg107, 150–151 (RK), 172–173 (HR), Lys183, Glu213, Asp234, 260–262 (SGG), and Gly282 each bind quinolinate.

Belongs to the NadC/ModD family. In terms of assembly, hexamer formed by 3 homodimers.

It catalyses the reaction nicotinate beta-D-ribonucleotide + CO2 + diphosphate = quinolinate + 5-phospho-alpha-D-ribose 1-diphosphate + 2 H(+). Its pathway is cofactor biosynthesis; NAD(+) biosynthesis; nicotinate D-ribonucleotide from quinolinate: step 1/1. Its function is as follows. Involved in the catabolism of quinolinic acid (QA). This is Nicotinate-nucleotide pyrophosphorylase [carboxylating] (qprt) from Dictyostelium discoideum (Social amoeba).